Consider the following 904-residue polypeptide: Leucine--tRNA ligase (904 aa).

Residues 49–59 carry the 'HIGH' region motif; sequence PYPSGDLHIGH. The 'KMSKS' region motif lies at 663–667; it reads TMSKS. Lys666 contributes to the ATP binding site.

Belongs to the class-I aminoacyl-tRNA synthetase family.

The protein localises to the cytoplasm. The catalysed reaction is tRNA(Leu) + L-leucine + ATP = L-leucyl-tRNA(Leu) + AMP + diphosphate. This chain is Leucine--tRNA ligase, found in Roseiflexus castenholzii (strain DSM 13941 / HLO8).